Consider the following 292-residue polypeptide: Xyloglucan endotransglucosylase/hydrolase protein A (292 aa).

The first 20 residues, 1–20, serve as a signal peptide directing secretion; that stretch reads MGSSLWTCLILLSLASASFA. The GH16 domain maps to 21–219; sequence ANPRTPIDVP…WSKAPFIASY (199 aa). The active-site Nucleophile is glutamate 105. Catalysis depends on glutamate 109, which acts as the Proton donor. Residue glutamate 109 coordinates xyloglucan. An N-linked (GlcNAc...) asparagine glycan is attached at asparagine 113. Xyloglucan contacts are provided by residues 122–124, 132–134, 198–199, and glycine 203; these read QTN, DRE, and DW. 2 disulfides stabilise this stretch: cysteine 227–cysteine 236 and cysteine 273–cysteine 286. Arginine 278 is a binding site for xyloglucan.

This sequence belongs to the glycosyl hydrolase 16 family. XTH group 1 subfamily. In terms of processing, contains at least one intrachain disulfide bond essential for its enzymatic activity. As to expression, predominantly expressed in the phloem fibers of growing internodes. Expressed in xylem cells in the basal part of the internode. In the internode, it is expressed closer to the top of the internode compared to XTHB.

The protein localises to the secreted. It is found in the cell wall. Its subcellular location is the extracellular space. The protein resides in the apoplast. It carries out the reaction breaks a beta-(1-&gt;4) bond in the backbone of a xyloglucan and transfers the xyloglucanyl segment on to O-4 of the non-reducing terminal glucose residue of an acceptor, which can be a xyloglucan or an oligosaccharide of xyloglucan.. Catalyzes xyloglucan endohydrolysis (XEH) and/or endotransglycosylation (XET). Cleaves and religates xyloglucan polymers, an essential constituent of the primary cell wall, and thereby participates in cell wall construction of growing tissues. The chain is Xyloglucan endotransglucosylase/hydrolase protein A (XTHA) from Phaseolus angularis (Azuki bean).